The primary structure comprises 2360 residues: Protein Ycf2 (2360 aa).

Disordered stretches follow at residues Ser172–Asp193, Thr225–Asn255, and Lys944–Glu995. A compositionally biased stretch (low complexity) spans Lys234–Arg244. Residues Leu245–Asn254 show a composition bias toward basic and acidic residues. Residues Lys944–Glu959 show a composition bias toward basic residues. Basic and acidic residues predominate over residues Lys960–Arg993. Gly1425–Ser1432 contributes to the ATP binding site. 3 disordered regions span residues Tyr1499–Gly1518, Leu1843–Pro2031, and Pro2098–Ser2214. Residues Thr1849–Glu2011 show a composition bias toward acidic residues. A compositionally biased stretch (basic and acidic residues) spans Gly2012–Arg2024. Composition is skewed to acidic residues over residues Pro2098 to Glu2115 and Gly2122 to Ser2197.

This sequence belongs to the Ycf2 family.

Its subcellular location is the plastid. The protein resides in the chloroplast stroma. Its function is as follows. Probable ATPase of unknown function. Its presence in a non-photosynthetic plant (Epifagus virginiana) and experiments in tobacco indicate that it has an essential function which is probably not related to photosynthesis. The chain is Protein Ycf2 from Oenothera argillicola (Appalachian evening primrose).